The sequence spans 257 residues: OCIA domain-containing protein 1 (257 aa).

Disordered stretches follow at residues 1–20 and 148–257; these read MDSP…PHPL and YSDE…SWTD. An OCIA domain is found at 1-110; sequence MDSPLNDGSH…MRLPNSHLGE (110 aa). A compositionally biased stretch (polar residues) spans 156-170; sequence GRSTSLNLDTESRPT. Basic and acidic residues predominate over residues 204 to 216; the sequence is EDLRRRNREEYSK.

The protein belongs to the OCIAD1 family. Interacts with STAT3 and ARF1. As to expression, expressed in all cells of the primary lymph gland lobe.

The protein localises to the endosome. Maintains stem cell potency. Involved in endocytic pathways that mediate signaling during hematopoiesis. The sequence is that of OCIA domain-containing protein 1 (asrij) from Drosophila melanogaster (Fruit fly).